A 284-amino-acid chain; its full sequence is Pantothenate synthetase (284 aa).

30 to 37 (MGALHEGH) serves as a coordination point for ATP. The active-site Proton donor is the His-37. Gln-61 is a binding site for (R)-pantoate. Gln-61 is a binding site for beta-alanine. 147-150 (GEKD) lines the ATP pocket. Residue Gln-153 coordinates (R)-pantoate. ATP is bound by residues Val-176 and 184-187 (TSSR).

This sequence belongs to the pantothenate synthetase family. Homodimer.

It localises to the cytoplasm. The enzyme catalyses (R)-pantoate + beta-alanine + ATP = (R)-pantothenate + AMP + diphosphate + H(+). It functions in the pathway cofactor biosynthesis; (R)-pantothenate biosynthesis; (R)-pantothenate from (R)-pantoate and beta-alanine: step 1/1. Its function is as follows. Catalyzes the condensation of pantoate with beta-alanine in an ATP-dependent reaction via a pantoyl-adenylate intermediate. In Chlorobaculum tepidum (strain ATCC 49652 / DSM 12025 / NBRC 103806 / TLS) (Chlorobium tepidum), this protein is Pantothenate synthetase.